Here is a 464-residue protein sequence, read N- to C-terminus: Signal recognition particle 54 kDa protein (464 aa).

GTP contacts are provided by residues glycine 104–threonine 111, aspartate 184–arginine 188, and threonine 242–aspartate 245.

The protein belongs to the GTP-binding SRP family. SRP54 subfamily. As to quaternary structure, part of the signal recognition particle protein translocation system, which is composed of SRP and FtsY. Archaeal SRP consists of a 7S RNA molecule of 300 nucleotides and two protein subunits: SRP54 and SRP19.

The protein resides in the cytoplasm. It catalyses the reaction GTP + H2O = GDP + phosphate + H(+). Its function is as follows. Involved in targeting and insertion of nascent membrane proteins into the cytoplasmic membrane. Binds to the hydrophobic signal sequence of the ribosome-nascent chain (RNC) as it emerges from the ribosomes. The SRP-RNC complex is then targeted to the cytoplasmic membrane where it interacts with the SRP receptor FtsY. The polypeptide is Signal recognition particle 54 kDa protein (Halorubrum lacusprofundi (strain ATCC 49239 / DSM 5036 / JCM 8891 / ACAM 34)).